The sequence spans 734 residues: Photosystem I P700 chlorophyll a apoprotein A2 (734 aa).

Helical transmembrane passes span isoleucine 46–alanine 69, leucine 135–glutamine 158, leucine 175–isoleucine 199, methionine 273–tyrosine 291, leucine 330–tyrosine 353, alanine 369–isoleucine 395, alanine 417–histidine 439, and phenylalanine 517–valine 535. Residues cysteine 559 and cysteine 568 each contribute to the [4Fe-4S] cluster site. The next 2 helical transmembrane spans lie at alanine 575 to tryptophan 596 and leucine 643 to isoleucine 665. Chlorophyll a is bound by residues histidine 654, methionine 662, and tyrosine 670. Tryptophan 671 provides a ligand contact to phylloquinone. Residues leucine 707–alanine 727 traverse the membrane as a helical segment.

The protein belongs to the PsaA/PsaB family. In terms of assembly, the PsaA/B heterodimer binds the P700 chlorophyll special pair and subsequent electron acceptors. PSI consists of a core antenna complex that captures photons, and an electron transfer chain that converts photonic excitation into a charge separation. The eukaryotic PSI reaction center is composed of at least 11 subunits. P700 is a chlorophyll a/chlorophyll a' dimer, A0 is one or more chlorophyll a, A1 is one or both phylloquinones and FX is a shared 4Fe-4S iron-sulfur center. serves as cofactor.

It localises to the plastid. Its subcellular location is the chloroplast thylakoid membrane. The catalysed reaction is reduced [plastocyanin] + hnu + oxidized [2Fe-2S]-[ferredoxin] = oxidized [plastocyanin] + reduced [2Fe-2S]-[ferredoxin]. Functionally, psaA and PsaB bind P700, the primary electron donor of photosystem I (PSI), as well as the electron acceptors A0, A1 and FX. PSI is a plastocyanin-ferredoxin oxidoreductase, converting photonic excitation into a charge separation, which transfers an electron from the donor P700 chlorophyll pair to the spectroscopically characterized acceptors A0, A1, FX, FA and FB in turn. Oxidized P700 is reduced on the lumenal side of the thylakoid membrane by plastocyanin. This chain is Photosystem I P700 chlorophyll a apoprotein A2, found in Pinus thunbergii (Japanese black pine).